The primary structure comprises 469 residues: 3-isopropylmalate dehydratase large subunit (469 aa).

Residues cysteine 350, cysteine 410, and cysteine 413 each contribute to the [4Fe-4S] cluster site.

Belongs to the aconitase/IPM isomerase family. LeuC type 1 subfamily. Heterodimer of LeuC and LeuD. It depends on [4Fe-4S] cluster as a cofactor.

It catalyses the reaction (2R,3S)-3-isopropylmalate = (2S)-2-isopropylmalate. It participates in amino-acid biosynthesis; L-leucine biosynthesis; L-leucine from 3-methyl-2-oxobutanoate: step 2/4. In terms of biological role, catalyzes the isomerization between 2-isopropylmalate and 3-isopropylmalate, via the formation of 2-isopropylmaleate. This Rhizobium meliloti (strain 1021) (Ensifer meliloti) protein is 3-isopropylmalate dehydratase large subunit.